The chain runs to 219 residues: Small ribosomal subunit protein uS3 (219 aa).

One can recognise a KH type-2 domain in the interval 38 to 106 (IRKYINTKLA…KVHINIVEIK (69 aa)).

Belongs to the universal ribosomal protein uS3 family. In terms of assembly, part of the 30S ribosomal subunit. Forms a tight complex with proteins S10 and S14.

In terms of biological role, binds the lower part of the 30S subunit head. Binds mRNA in the 70S ribosome, positioning it for translation. In Latilactobacillus sakei subsp. sakei (strain 23K) (Lactobacillus sakei subsp. sakei), this protein is Small ribosomal subunit protein uS3.